The chain runs to 516 residues: Maturase K (516 aa).

This sequence belongs to the intron maturase 2 family. MatK subfamily.

The protein localises to the plastid. It is found in the chloroplast. Its function is as follows. Usually encoded in the trnK tRNA gene intron. Probably assists in splicing its own and other chloroplast group II introns. This Cypripedium calceolus (Yellow lady's slipper) protein is Maturase K.